Here is a 377-residue protein sequence, read N- to C-terminus: Probable transposase for insertion sequence element IS5377 (377 aa).

Belongs to the transposase 11 family.

This chain is Probable transposase for insertion sequence element IS5377, found in Geobacillus stearothermophilus (Bacillus stearothermophilus).